Here is a 426-residue protein sequence, read N- to C-terminus: MYVLKNGQILNESGELENKDVLIQNGKVNLIADSIEVTSGEEFDATGKLIAPGFIDVHVHLREPGGEHKETILTGTKAAARGGYTTICSMPNTKPVPDSKEVMERLQAKIKETAEVRVLPYASITTSLGTDELVDFEALKEAGAFAFTDDGVGVQLAGTMYEAMKRAAALDMAIVAHCEDNSLIYGGVVHDGIFAEREGLKGIPNIAESVQIARDVLLAEAAGCHYHVCHISTKESVRVVRDAKRAGIRVTAEVSPHHLILDEEAIPGNDGQWKMNPPLRSKADRAALLEGLLDGTIDFIATDHAPHAAEEKNVPMEQAAFGIVGLETAFPLLYTHFVQTNEWTLKQLIDWMTVKPAECFKLPYGKLEEGTTADIVVLDLEKEATIDPDTFYSKGKNTPFVGETCIGWPVATFVEGTLVYKEGESK.

H58 and H60 together coordinate Zn(2+). Residues 60 to 62 (HLR) and N92 each bind substrate. 3 residues coordinate Zn(2+): D150, H177, and H230. N276 lines the substrate pocket. Residue D303 participates in Zn(2+) binding. Residue D303 is part of the active site. Residues H307 and 321–322 (FG) each bind substrate.

This sequence belongs to the metallo-dependent hydrolases superfamily. DHOase family. Class I DHOase subfamily. It depends on Zn(2+) as a cofactor.

It carries out the reaction (S)-dihydroorotate + H2O = N-carbamoyl-L-aspartate + H(+). It functions in the pathway pyrimidine metabolism; UMP biosynthesis via de novo pathway; (S)-dihydroorotate from bicarbonate: step 3/3. Functionally, catalyzes the reversible cyclization of carbamoyl aspartate to dihydroorotate. The chain is Dihydroorotase from Listeria welshimeri serovar 6b (strain ATCC 35897 / DSM 20650 / CCUG 15529 / CIP 8149 / NCTC 11857 / SLCC 5334 / V8).